A 271-amino-acid chain; its full sequence is Ribosomal RNA small subunit methyltransferase A (271 aa).

Asparagine 28, leucine 30, glycine 54, glutamate 75, aspartate 99, and asparagine 117 together coordinate S-adenosyl-L-methionine.

Belongs to the class I-like SAM-binding methyltransferase superfamily. rRNA adenine N(6)-methyltransferase family. RsmA subfamily.

The protein localises to the cytoplasm. The enzyme catalyses adenosine(1518)/adenosine(1519) in 16S rRNA + 4 S-adenosyl-L-methionine = N(6)-dimethyladenosine(1518)/N(6)-dimethyladenosine(1519) in 16S rRNA + 4 S-adenosyl-L-homocysteine + 4 H(+). In terms of biological role, specifically dimethylates two adjacent adenosines (A1518 and A1519) in the loop of a conserved hairpin near the 3'-end of 16S rRNA in the 30S particle. May play a critical role in biogenesis of 30S subunits. The chain is Ribosomal RNA small subunit methyltransferase A from Thermus thermophilus (strain ATCC BAA-163 / DSM 7039 / HB27).